The primary structure comprises 476 residues: Stromelysin-2 (476 aa).

A signal peptide spans 1-17 (MMHLAFLVLLCLPVCSA). Residues 18 to 98 (YPLSGAAKEE…PRCGVPDVGH (81 aa)) constitute a propeptide, activation peptide. The short motif at 89–96 (PRCGVPDV) is the Cysteine switch element. Zn(2+)-binding residues include cysteine 91, histidine 167, aspartate 169, histidine 182, histidine 195, and histidine 217. Glutamate 218 is a catalytic residue. Residues histidine 221 and histidine 227 each contribute to the Zn(2+) site. 4 Hemopexin repeats span residues 286–335 (PAKC…WPSL), 336–382 (PSYL…GFPP), 384–432 (IRKI…FPGV), and 433–476 (EPKV…WLHC). Cysteine 289 and cysteine 476 form a disulfide bridge.

This sequence belongs to the peptidase M10A family. Zn(2+) is required as a cofactor. The cofactor is Ca(2+).

Its subcellular location is the secreted. The protein localises to the extracellular space. It is found in the extracellular matrix. The catalysed reaction is Similar to stromelysin 1, but action on collagen types III, IV and V is weak.. Can degrade fibronectin, gelatins of type I, III, IV, and V; weakly collagens III, IV, and V. Activates procollagenase. This Homo sapiens (Human) protein is Stromelysin-2 (MMP10).